Here is a 417-residue protein sequence, read N- to C-terminus: Serine hydroxymethyltransferase (417 aa).

(6S)-5,6,7,8-tetrahydrofolate is bound by residues L119 and 123-125; that span reads GHL. Residue K227 is modified to N6-(pyridoxal phosphate)lysine.

Belongs to the SHMT family. Homodimer. Requires pyridoxal 5'-phosphate as cofactor.

The protein resides in the cytoplasm. The catalysed reaction is (6R)-5,10-methylene-5,6,7,8-tetrahydrofolate + glycine + H2O = (6S)-5,6,7,8-tetrahydrofolate + L-serine. It participates in one-carbon metabolism; tetrahydrofolate interconversion. Its pathway is amino-acid biosynthesis; glycine biosynthesis; glycine from L-serine: step 1/1. In terms of biological role, catalyzes the reversible interconversion of serine and glycine with tetrahydrofolate (THF) serving as the one-carbon carrier. This reaction serves as the major source of one-carbon groups required for the biosynthesis of purines, thymidylate, methionine, and other important biomolecules. Also exhibits THF-independent aldolase activity toward beta-hydroxyamino acids, producing glycine and aldehydes, via a retro-aldol mechanism. This chain is Serine hydroxymethyltransferase, found in Buchnera aphidicola subsp. Cinara cedri (strain Cc).